A 631-amino-acid chain; its full sequence is Probable G-protein coupled receptor 153 (631 aa).

The Extracellular portion of the chain corresponds to 1–11 (MSDERRLPSSA). A helical membrane pass occupies residues 12-32 (VGWLACGGLSLLANAWGILSV). Over 33-41 (GAKQKKWKP) the chain is Cytoplasmic. The helical transmembrane segment at 42–62 (LEFLLCTLAATHMLNVAVPIA) threads the bilayer. Residues 63–84 (TYAVVQLRRQRPDYEWNEGLCK) lie on the Extracellular side of the membrane. A helical transmembrane segment spans residues 85 to 105 (VFVSTFYTLTLATCFSVTSIS). At 106–126 (YHRMWMVRWPVNYRLSNAKKQ) the chain is on the cytoplasmic side. The helical transmembrane segment at 127–147 (AVHTVMGIWMVSFILSALPAV) threads the bilayer. Residues 148 to 162 (GWHDTSERFYTHGCR) are Extracellular-facing. Residues 163–183 (FIVAEIGLGFGVCFLLLVGGS) traverse the membrane as a helical segment. Topologically, residues 184–243 (VAMGMVCTAIALFQTLATQVGHRADRRTFTVPTIVVEDAQGKRRSSIDGSEPARTSLQIT) are cytoplasmic. The chain crosses the membrane as a helical span at residues 244–264 (GLVATIVVIYDCLMGFPVLVV). The Extracellular portion of the chain corresponds to 265–276 (SFSSLRADASAP). A helical membrane pass occupies residues 277-297 (WMALCVLWCSVTQALLLPLFL). The Cytoplasmic segment spans residues 298–631 (WTCDRYRADL…LHSDSLGSAS (334 aa)). 3 disordered regions span residues 486 to 518 (LQPS…RSAS), 546 to 590 (QPFP…SLSA), and 603 to 631 (CGSI…GSAS). Residues 605–617 (SISSFLSSPSESS) are compositionally biased toward low complexity.

Belongs to the G-protein coupled receptor 1 family.

It is found in the cell membrane. Functionally, orphan receptor. The polypeptide is Probable G-protein coupled receptor 153 (Gpr153) (Mus musculus (Mouse)).